The following is a 907-amino-acid chain: Isoleucine--tRNA ligase (907 aa).

The 'HIGH' region motif lies at 57 to 67; it reads PFANGKAHMGS. Residue E549 coordinates L-isoleucyl-5'-AMP. The short motif at 590-594 is the 'KMSKS' region element; the sequence is KLSKS. K593 contributes to the ATP binding site. Residues C867, C870, C889, and C892 each coordinate Zn(2+).

It belongs to the class-I aminoacyl-tRNA synthetase family. IleS type 1 subfamily. Monomer. It depends on Zn(2+) as a cofactor.

The protein resides in the cytoplasm. The catalysed reaction is tRNA(Ile) + L-isoleucine + ATP = L-isoleucyl-tRNA(Ile) + AMP + diphosphate. Catalyzes the attachment of isoleucine to tRNA(Ile). As IleRS can inadvertently accommodate and process structurally similar amino acids such as valine, to avoid such errors it has two additional distinct tRNA(Ile)-dependent editing activities. One activity is designated as 'pretransfer' editing and involves the hydrolysis of activated Val-AMP. The other activity is designated 'posttransfer' editing and involves deacylation of mischarged Val-tRNA(Ile). The chain is Isoleucine--tRNA ligase from Methylacidiphilum infernorum (isolate V4) (Methylokorus infernorum (strain V4)).